Consider the following 162-residue polypeptide: NADH-quinone oxidoreductase subunit I (162 aa).

4Fe-4S ferredoxin-type domains lie at 54-83 (RRYENGEERCIACKLCEAVCPALAITIESE) and 93-122 (TRYDIDLTKCIFCGFCEESCPVDSIVETQI). [4Fe-4S] cluster contacts are provided by Cys63, Cys66, Cys69, Cys73, Cys102, Cys105, Cys108, and Cys112.

Belongs to the complex I 23 kDa subunit family. As to quaternary structure, NDH-1 is composed of 14 different subunits. Subunits NuoA, H, J, K, L, M, N constitute the membrane sector of the complex. It depends on [4Fe-4S] cluster as a cofactor.

It localises to the cell inner membrane. It carries out the reaction a quinone + NADH + 5 H(+)(in) = a quinol + NAD(+) + 4 H(+)(out). In terms of biological role, NDH-1 shuttles electrons from NADH, via FMN and iron-sulfur (Fe-S) centers, to quinones in the respiratory chain. The immediate electron acceptor for the enzyme in this species is believed to be ubiquinone. Couples the redox reaction to proton translocation (for every two electrons transferred, four hydrogen ions are translocated across the cytoplasmic membrane), and thus conserves the redox energy in a proton gradient. This is NADH-quinone oxidoreductase subunit I from Burkholderia cenocepacia (strain ATCC BAA-245 / DSM 16553 / LMG 16656 / NCTC 13227 / J2315 / CF5610) (Burkholderia cepacia (strain J2315)).